A 120-amino-acid polypeptide reads, in one-letter code: NAD(P)H-quinone oxidoreductase subunit 3, chloroplastic (120 aa).

A run of 3 helical transmembrane segments spans residues 9-29 (IFWAFLIISSVIPILAFLISG), 64-84 (MFALVFVVFDVETVFLYPWAM), and 88-108 (VLGVPVFIEALIFVLILIVGS).

Belongs to the complex I subunit 3 family. In terms of assembly, NDH is composed of at least 16 different subunits, 5 of which are encoded in the nucleus.

It is found in the plastid. It localises to the chloroplast thylakoid membrane. It catalyses the reaction a plastoquinone + NADH + (n+1) H(+)(in) = a plastoquinol + NAD(+) + n H(+)(out). It carries out the reaction a plastoquinone + NADPH + (n+1) H(+)(in) = a plastoquinol + NADP(+) + n H(+)(out). In terms of biological role, NDH shuttles electrons from NAD(P)H:plastoquinone, via FMN and iron-sulfur (Fe-S) centers, to quinones in the photosynthetic chain and possibly in a chloroplast respiratory chain. The immediate electron acceptor for the enzyme in this species is believed to be plastoquinone. Couples the redox reaction to proton translocation, and thus conserves the redox energy in a proton gradient. The polypeptide is NAD(P)H-quinone oxidoreductase subunit 3, chloroplastic (Platanus occidentalis (Sycamore)).